The sequence spans 482 residues: uncharacterized protein (482 aa).

The 75-residue stretch at 5–79 (IYYKFKSQKD…STSVIVRRVP (75 aa)) folds into the DWNN domain. The disordered stretch occupies residues 86-108 (GTAARYVSGAPKTTGARSDSVKR). Residues 183–200 (YICYRCGQKGHWIQACPT) form a CCHC-type zinc finger. The RING-type; degenerate zinc-finger motif lies at 282 to 322 (CTLCKKLARNACRTPCCDKLFCEECIQTALLDSDFECPNCH). Disordered regions lie at residues 346 to 393 (KSVL…SSAV) and 447 to 482 (QVYH…TKTN). Over residues 451-466 (NNRNPPRTNSRPSNAS) the composition is skewed to low complexity.

The protein localises to the nucleus. This is an uncharacterized protein from Schizosaccharomyces pombe (strain 972 / ATCC 24843) (Fission yeast).